Consider the following 320-residue polypeptide: MLYRRNPQLNKNGELIHLLSTEGLSKAILTQILDTAANFVSVSSREVKKVPLLRGKSVFNLFFENSTRTRTTFEIAATRLSADVINLDIARSSASKGESLLDTIANLSAMAADLFVVRHGESGAPYLIAQHVAPHVHVVNAGDGRHAHPTQGLLDMYTIRHYKKDFSNLTVAIVGDVLHSRVARSDIHALTTLGCAEVRVVGPKTLVPADMAQMGVRVCNTLEEGIRGADVIIMLRLQNERMTGALLPSSQEFSKSFGLTTDKLQLARPDAIVMHPGPINRGVEIDSAVVDGVQSVILPQVTFGIAVRMAVMSIVAGNEA.

Carbamoyl phosphate is bound by residues arginine 68 and threonine 69. Lysine 96 is a binding site for L-aspartate. Residues arginine 118, histidine 148, and glutamine 151 each coordinate carbamoyl phosphate. Residues arginine 181 and arginine 236 each contribute to the L-aspartate site. Glycine 277 and proline 278 together coordinate carbamoyl phosphate.

Belongs to the aspartate/ornithine carbamoyltransferase superfamily. ATCase family. Heterododecamer (2C3:3R2) of six catalytic PyrB chains organized as two trimers (C3), and six regulatory PyrI chains organized as three dimers (R2).

It carries out the reaction carbamoyl phosphate + L-aspartate = N-carbamoyl-L-aspartate + phosphate + H(+). The protein operates within pyrimidine metabolism; UMP biosynthesis via de novo pathway; (S)-dihydroorotate from bicarbonate: step 2/3. Catalyzes the condensation of carbamoyl phosphate and aspartate to form carbamoyl aspartate and inorganic phosphate, the committed step in the de novo pyrimidine nucleotide biosynthesis pathway. This chain is Aspartate carbamoyltransferase catalytic subunit, found in Polaromonas naphthalenivorans (strain CJ2).